The primary structure comprises 25 residues: Snaclec bothroalternin subunit alpha/beta (25 aa).

The C-type lectin domain occupies 1–25 (DCPSDWSNHEGHCYRVFNEWMNWAD). Residues cysteine 2 and cysteine 13 are joined by a disulfide bond.

It belongs to the snaclec family. Heterodimer of subunits alpha and beta; disulfide-linked. Expressed by the venom gland.

It is found in the secreted. In terms of biological role, thrombin (F2) inhibitor that inhibits aggregation of rabbit platelets induced by alpha-thrombin. This chain is Snaclec bothroalternin subunit alpha/beta, found in Bothrops alternatus (Urutu).